A 277-amino-acid chain; its full sequence is Alpha carbonic anhydrase 3 (277 aa).

The first 19 residues, 1-19 (MKTIILFVTFLALSSSSLA), serve as a signal peptide directing secretion. The 236-residue stretch at 24 to 259 (TEFHYKPGEI…LNGRLVYLNE (236 aa)) folds into the Alpha-carbonic anhydrase domain. Cys49 and Cys209 are joined by a disulfide. Residues Asn70 and Asn107 are each glycosylated (N-linked (GlcNAc...) asparagine). Residues His117, His119, and His136 each contribute to the Zn(2+) site. 205–206 (TT) serves as a coordination point for substrate. A disordered region spans residues 257–277 (LNEQSSPSPTPRLRIPRVGPV).

This sequence belongs to the alpha-class carbonic anhydrase family. Requires Zn(2+) as cofactor. Post-translationally, N-glycosylated. In terms of tissue distribution, expressed in flowers and siliques.

The protein localises to the plastid. It localises to the chloroplast stroma. The enzyme catalyses hydrogencarbonate + H(+) = CO2 + H2O. In terms of biological role, reversible hydration of carbon dioxide. The sequence is that of Alpha carbonic anhydrase 3 (ACA3) from Arabidopsis thaliana (Mouse-ear cress).